Reading from the N-terminus, the 109-residue chain is Peptide chaperone MftB (109 aa).

It belongs to the peptide chaperone MftB family. In terms of assembly, interacts with MftA and MftC.

In terms of biological role, peptide chaperone involved in the biosynthesis of the enzyme cofactor mycofactocin (MFT). Binds MftA and MftC with high affinity, and is essential for MftC activity on MftA, likely via the formation of a ternary complex. In Mycobacterium ulcerans (strain Agy99), this protein is Peptide chaperone MftB.